The primary structure comprises 1173 residues: Alpha-mannosidase 2 (1173 aa).

The interval 1–21 (MPFSSYIGNSRRSSTGGGTGG) is disordered. Topologically, residues 1–50 (MPFSSYIGNSRRSSTGGGTGGWGQSLLPTALSKSKLAINRKPRKRTLVVN) are cytoplasmic. A helical; Signal-anchor membrane pass occupies residues 51–71 (FIFANFFVIALTVSLLFFLLT). The Lumenal segment spans residues 72–1173 (LFHFGVPGPI…AYKLELRPHK (1102 aa)). Residue asparagine 106 is glycosylated (N-linked (GlcNAc...) asparagine). Histidine 162 and aspartate 164 together coordinate Zn(2+). N-linked (GlcNAc...) asparagine glycosylation occurs at asparagine 262. Residue aspartate 276 participates in Zn(2+) binding. The active-site Nucleophile is the aspartate 276. Asparagine 467 is a glycosylation site (N-linked (GlcNAc...) asparagine). Residue histidine 564 coordinates Zn(2+). N-linked (GlcNAc...) asparagine glycans are attached at residues asparagine 675, asparagine 772, asparagine 782, asparagine 991, asparagine 1098, and asparagine 1108.

It belongs to the glycosyl hydrolase 38 family. In terms of assembly, homodimer; disulfide-linked. Interacts with GALT1. Requires Zn(2+) as cofactor. In terms of processing, glycosylated.

It is found in the golgi apparatus membrane. The enzyme catalyses N(4)-{beta-D-GlcNAc-(1-&gt;2)-alpha-D-Man-(1-&gt;3)-[alpha-D-Man-(1-&gt;3)-[alpha-D-Man-(1-&gt;6)]-alpha-D-Man-(1-&gt;6)]-beta-D-Man-(1-&gt;4)-beta-D-GlcNAc-(1-&gt;4)-beta-D-GlcNAc}-L-asparaginyl-[protein] + 2 H2O = 2 alpha-D-mannopyranose + an N(4)-{beta-D-GlcNAc-(1-&gt;2)-alpha-D-Man-(1-&gt;3)-[alpha-D-Man-(1-&gt;6)]-beta-D-Man-(1-&gt;4)-beta-D-GlcNAc-(1-&gt;4)-beta-D-GlcNAc}-L-asparaginyl-[protein]. Its pathway is protein modification; protein glycosylation. With respect to regulation, inhibited by 1 mM Cu(2+) and by the class II alpha-mannosidase inhibitor swainsonine. Catalyzes the first committed step in the biosynthesis of complex N-glycans. It controls conversion of high mannose to complex N-glycans; the final hydrolytic step in the N-glycan maturation pathway. Converts GlcNAcMan(5)GlcNAc(2) (Man5Gn) into GlcNAcMan(3)GlcNAc(2) (MGn) by sequential removal of two alpha1,6- and alpha1,3-linked mannose residues from the alpha1,6-mannose branch of the substrate. To a lesser extent, also able to cleave beta1,2-xylosylated Man5Gn-glycopeptide (Man5GnX-GP) and pyridylaminated substrates Man5Gn-PA and Man5GnX-PA, but not active toward Man5-glycopeptide. Required for resistance to salt stress. This chain is Alpha-mannosidase 2, found in Arabidopsis thaliana (Mouse-ear cress).